Consider the following 243-residue polypeptide: Precursor of CEP9 (243 aa).

The signal sequence occupies residues 1-26 (MKLLSITLTSIVISMVFYQTPITTEA). Residues 28–44 (SLRKTNDQDHFKAGFTD) constitute a propeptide that is removed on maturation. 3 disordered regions span residues 42 to 63 (FTDDFVPTSPGNSPGVGHKKGN), 91 to 173 (KTGS…VKGF), and 189 to 243 (NGQD…EPKA). Pro-48 is modified (hydroxyproline; partial). Residue Pro-51 is modified to Hydroxyproline. Pro-55 is modified (hydroxyproline; partial). A propeptide spanning residues 60–96 (KKGNVNVEGFQDDFKPTEGRKLLKTNVQDHFKTGSTD) is cleaved from the precursor. 3 positions are modified to hydroxyproline: Pro-100, Pro-103, and Pro-107. A propeptide spanning residues 112–148 (KKGNVNVESSEDDFKHKEGRKLQQTNGQNHFKTGSTD) is cleaved from the precursor. Over residues 133–147 (LQQTNGQNHFKTGST) the composition is skewed to polar residues. 3 positions are modified to hydroxyproline: Pro-152, Pro-155, and Pro-159. Residues 164–200 (KKGHANVKGFKDDFAPTEEIRLQKMNGQDHFKTGSTD) constitute a propeptide that is removed on maturation. Hydroxyproline occurs at positions 204, 207, and 211. Residues 216 to 219 (KKGD) constitute a propeptide that is removed on maturation. Pro-223, Pro-226, and Pro-230 each carry hydroxyproline. The propeptide occupies 235–243 (AVKNDEPKA).

This sequence belongs to the C-terminally encoded plant signaling peptide (CEP) family. Interacts with CEP receptors (e.g. CEPR1 and CEPR2). In terms of processing, hydroxylated peptide is more active than non-hydroxylated peptide. The mature small signaling peptide is generated by proteolytic processing of the longer precursor. In terms of tissue distribution, expressed in lateral root primordia and in lateral roots excluding the meristem region. Also present in the aerial tissues, such as leaf petioles and the shoot apex region.

The protein localises to the secreted. The protein resides in the extracellular space. Its subcellular location is the apoplast. Extracellular signaling peptide that represses primary root growth rate and significantly inhibits lateral root formation. Modulates leaf morphology. Regulates systemic nitrogen (N)-demand signaling. Mediates up-regulation of genes involved in N uptake and assimilation pathways. This is Precursor of CEP9 from Arabidopsis thaliana (Mouse-ear cress).